We begin with the raw amino-acid sequence, 446 residues long: MDELPPELWIKILSRINDSESLARCRVASKTLNSLSREVRAVNLICTWSRYLKSRSIVVVTPFKTIFRSLIENSSKIRSISVGVDKALKGMSFDDFNEEDSKDLYLTDVEFVKEWLPRVREDLENLSISDFWIQSCWRKSDILALISSNCSKLVKLEVKNAWLSVVGLTEMPNLRYLTLEFIRLDDENLEKVNDCFPFLQELNLIGVGGLKEPRIHFLHLKSCHWTVSNAPLSLAIVAPNLLELKLKCNKPKSLLVETPKLVQCHLSVEDAEGVSFGEFQDLKTLELVSPDMYRLISNISFGNKIKKLAVDSVKSIEQSERLELGLATILKAFPGITSLSLSPRTWSDIETHFQSQGGLGDMKGTDSLKQITARVQMSDHTNVHQTVSFIRSIVNKYRGLTDMRLMIHQDKDPRVRSNLISTCMMSNPRVRWKWGMWAEGGEDMWV.

The F-box domain occupies 1–51 (MDELPPELWIKILSRINDSESLARCRVASKTLNSLSREVRAVNLICTWSRY). LRR repeat units lie at residues 59–84 (VVTPFKTIFRSLIENSSKIRSISVGV), 103–130 (DLYLTDVEFVKEWLPRVREDLENLSISD), 135–160 (SCWRKSDILALISSNCSKLVKLEVKN), 181–206 (FIRLDDENLEKVNDCFPFLQELNLIG), 223–248 (CHWTVSNAPLSLAIVAPNLLELKLKC), 265–289 (HLSVEDAEGVSFGEFQDLKTLELVS), 318–343 (QSERLELGLATILKAFPGITSLSLSP), and 382–407 (NVHQTVSFIRSIVNKYRGLTDMRLMI).

The sequence is that of F-box/LRR-repeat protein At4g29420 from Arabidopsis thaliana (Mouse-ear cress).